The chain runs to 143 residues: Peptide methionine sulfoxide reductase MsrB (143 aa).

Residues 16–139 (DAELRRRLTP…NSAALNFESR (124 aa)) form the MsrB domain. Positions 55, 58, 104, and 107 each coordinate Zn(2+). The active-site Nucleophile is cysteine 128.

The protein belongs to the MsrB Met sulfoxide reductase family. Requires Zn(2+) as cofactor.

The enzyme catalyses L-methionyl-[protein] + [thioredoxin]-disulfide + H2O = L-methionyl-(R)-S-oxide-[protein] + [thioredoxin]-dithiol. This chain is Peptide methionine sulfoxide reductase MsrB, found in Burkholderia lata (strain ATCC 17760 / DSM 23089 / LMG 22485 / NCIMB 9086 / R18194 / 383).